The following is a 629-amino-acid chain: MAKNIKTNKKPQQVNKKEMSKQHAKQIKQQLNETVATGIIDGVFVYTEALSIADFANQIGKSVAEILKYFFAQGLMLNQNVVLSEEQMAELALEFGFDFRKEESLTKENFFEALDASEEDKPEDLEHRAPIVTIMGHVDHGKTTLLDSIKNTNVVGGEAGGITQAIGAYQVKNKDGKKITFIDTPGHEAFSEMRSRGANVTDIVILIVAADDGVMPQTEEAIDHAKLANVPIIVFINKCDKPGADPERVKAELMKYEIVAEEYGGDIPFVQGSAKQKIGLDQLEETILLIAEMQDYKANPNKLAKGVVIEAHLDKAKGPVASILVKEGTLDIRDMIIAGTTYGNIKHMEDETNKKVLKAGPSKPVVVYGLNEVPSAGDKFIVMNDEKMARTIAEAQAEKKLAAERQSNQIFSLDSIKKHIDDGELKAINLIVKADTQGSVEALKGSLTKIDIPGVKLNIIRASVGTITLSDVTLASTVTDGIVLIYGFNVRPDAVVRKKAEEEGIEIRLHNIIYKVIEELEDAAKGMLDPEYKEVVTGSAEIRATFKHSDIGTIGGFHITDGSIERKSKVRIIRNGIVIYTGELATLKHLKDDIKEAKINSEGGLTIKNFNDIKEGDIVEGYKEEEVKK.

The segment at 1-20 is disordered; it reads MAKNIKTNKKPQQVNKKEMS. The region spanning 127–297 is the tr-type G domain; the sequence is HRAPIVTIMG…LLIAEMQDYK (171 aa). The G1 stretch occupies residues 136 to 143; sequence GHVDHGKT. Residue 136–143 coordinates GTP; it reads GHVDHGKT. Residues 161–165 are G2; the sequence is GITQA. Residues 183 to 186 are G3; sequence DTPG. GTP contacts are provided by residues 183–187 and 237–240; these read DTPGH and NKCD. Residues 237–240 are G4; it reads NKCD. Positions 273–275 are G5; sequence SAK.

This sequence belongs to the TRAFAC class translation factor GTPase superfamily. Classic translation factor GTPase family. IF-2 subfamily.

Its subcellular location is the cytoplasm. One of the essential components for the initiation of protein synthesis. Protects formylmethionyl-tRNA from spontaneous hydrolysis and promotes its binding to the 30S ribosomal subunits. Also involved in the hydrolysis of GTP during the formation of the 70S ribosomal complex. The protein is Translation initiation factor IF-2 of Mesoplasma florum (strain ATCC 33453 / NBRC 100688 / NCTC 11704 / L1) (Acholeplasma florum).